The following is an 88-amino-acid chain: Small cysteine and glycine repeat-containing protein 1 (88 aa).

Residues 4–72 (CGCGGCGGCG…TCSSCGYSCG (69 aa)) are 10 X 2 AA repeats of CG.

The protein belongs to the KRTAP type 28 family.

In terms of biological role, in the hair cortex, hair keratin intermediate filaments are embedded in an interfilamentous matrix, consisting of hair keratin-associated proteins (KRTAP), which are essential for the formation of a rigid and resistant hair shaft through their extensive disulfide bond cross-linking with abundant cysteine residues of hair keratins. The matrix proteins include the high-sulfur and high-glycine-tyrosine keratins. The sequence is that of Small cysteine and glycine repeat-containing protein 1 from Homo sapiens (Human).